The primary structure comprises 1415 residues: G8 domain-containing protein DDB_G0278975 (1415 aa).

The signal sequence occupies residues 1–24 (MKINKIILFFFLSCLYLFSSSVSA). 2 consecutive transmembrane segments (helical) span residues 107–127 (INLN…GLFT) and 138–158 (LLFI…SIKI). Residues asparagine 245, asparagine 366, asparagine 428, asparagine 466, and asparagine 579 are each glycosylated (N-linked (GlcNAc...) asparagine). Positions 566-692 (STWPNGIIPS…YHNTWSKLSA (127 aa)) constitute a G8 domain. PbH1 repeat units lie at residues 819–841 (LKNS…TIHG) and 842–864 (TNNV…YLED). Asparagine 844, asparagine 985, asparagine 1009, asparagine 1023, asparagine 1099, asparagine 1244, and asparagine 1342 each carry an N-linked (GlcNAc...) asparagine glycan.

Belongs to the comF family.

The protein resides in the membrane. The polypeptide is G8 domain-containing protein DDB_G0278975 (Dictyostelium discoideum (Social amoeba)).